The chain runs to 262 residues: MNNLERLRSENPLVICYTNDVVKNFTANGLLSLGASPAMSEAPEEAEDFTRMASALLINIGTLTRENEEDIIKIGKIANQQGTPIVFDPVAVGASTYRKNFCQRFLGEVNVTVIKGNASEILTLIDFNTTMKGTDSDSELDSVNIAKKAANTLNTAIVITGKDDIIAKNEKIIKLSNGSPLLTKITGAGCLLGGVLASFLFRNTQPSIDLLVEAVSVYNIAAEFAEQAPHVNGPSTFLSELLDQLYQMNDITYKNQVKKVEI.

Substrate is bound at residue Met39. Lys115 and Thr160 together coordinate ATP. Gly187 contacts substrate.

This sequence belongs to the Thz kinase family. The cofactor is Mg(2+).

The catalysed reaction is 5-(2-hydroxyethyl)-4-methylthiazole + ATP = 4-methyl-5-(2-phosphooxyethyl)-thiazole + ADP + H(+). The protein operates within cofactor biosynthesis; thiamine diphosphate biosynthesis; 4-methyl-5-(2-phosphoethyl)-thiazole from 5-(2-hydroxyethyl)-4-methylthiazole: step 1/1. In terms of biological role, catalyzes the phosphorylation of the hydroxyl group of 4-methyl-5-beta-hydroxyethylthiazole (THZ). The protein is Hydroxyethylthiazole kinase of Staphylococcus epidermidis (strain ATCC 12228 / FDA PCI 1200).